The primary structure comprises 207 residues: Claudin-11 (207 aa).

A topological domain (cytoplasmic) is located at residue Met-1. The helical transmembrane segment at 2-22 (VATCLQVVGFVTSFVGWIGII) threads the bilayer. At 23–82 (VTTSTNDWVVTCSYTIPTCRKMDELGSKGLWADCVMATGLHHCKPLVDILILPGYAQACR) the chain is on the extracellular side. Residues 83–103 (ALMIAASVLGLPGILLLLTVL) traverse the membrane as a helical segment. The Cytoplasmic segment spans residues 104–122 (PCIRMGHEPGVAKYRRAQL). The chain crosses the membrane as a helical span at residues 123-143 (AGVLLILLALCAIVATIWFPV). The Extracellular segment spans residues 144–157 (CAHREITIVSFGYS). Residues 158 to 178 (LYAGWIGAVMCLVGGCVIVCC) form a helical membrane-spanning segment. The Cytoplasmic segment spans residues 179–207 (SGDAQSFGENRFYYSSGSSSPTHAKSAHV). Ser-193, Ser-194, Ser-197, and Ser-198 each carry phosphoserine.

Belongs to the claudin family. In terms of assembly, interacts with tetraspanin-3/TSPAN3. Interacts with OCLN.

It localises to the cell junction. Its subcellular location is the tight junction. The protein localises to the cell membrane. Its function is as follows. Plays a major role in tight junction-specific obliteration of the intercellular space, through calcium-independent cell-adhesion activity. The protein is Claudin-11 (Cldn11) of Rattus norvegicus (Rat).